We begin with the raw amino-acid sequence, 177 residues long: Thymidine kinase (177 aa).

11–18 contributes to the ATP binding site; that stretch reads GPMFSGKS. The Proton acceptor role is filled by E83. F113 contributes to the substrate binding site. Positions 138 and 141 each coordinate Zn(2+). 157 to 161 is a substrate binding site; sequence IEIIG. C170 and C173 together coordinate Zn(2+).

Belongs to the thymidine kinase family. Homotetramer. Two molecules of substrate bind to each enzyme tetramer.

It catalyses the reaction thymidine + ATP = dTMP + ADP + H(+). In terms of biological role, phosphorylates thymidine and thymidine analogs, such as azidothymidine (AZT). Part of the salvage pathway for pyrimidine deoxyribonucleotide synthesis. In Vaccinia virus (strain Copenhagen) (VACV), this protein is Thymidine kinase (OPG101).